Reading from the N-terminus, the 221-residue chain is Protein-L-isoaspartate O-methyltransferase (221 aa).

Ser64 is an active-site residue.

It belongs to the methyltransferase superfamily. L-isoaspartyl/D-aspartyl protein methyltransferase family.

It localises to the cytoplasm. The enzyme catalyses [protein]-L-isoaspartate + S-adenosyl-L-methionine = [protein]-L-isoaspartate alpha-methyl ester + S-adenosyl-L-homocysteine. In terms of biological role, catalyzes the methyl esterification of L-isoaspartyl residues in peptides and proteins that result from spontaneous decomposition of normal L-aspartyl and L-asparaginyl residues. It plays a role in the repair and/or degradation of damaged proteins. This is Protein-L-isoaspartate O-methyltransferase from Thermococcus sibiricus (strain DSM 12597 / MM 739).